The following is a 376-amino-acid chain: 3-dehydroquinate synthase (376 aa).

Residues Gly115–Asp119, Thr139–Ser140, Lys152, and Lys161 contribute to the NAD(+) site. Zn(2+)-binding residues include Glu194, His256, and His275.

Belongs to the sugar phosphate cyclases superfamily. Dehydroquinate synthase family. Co(2+) is required as a cofactor. Zn(2+) serves as cofactor. Requires NAD(+) as cofactor.

The protein localises to the cytoplasm. The catalysed reaction is 7-phospho-2-dehydro-3-deoxy-D-arabino-heptonate = 3-dehydroquinate + phosphate. Its pathway is metabolic intermediate biosynthesis; chorismate biosynthesis; chorismate from D-erythrose 4-phosphate and phosphoenolpyruvate: step 2/7. Catalyzes the conversion of 3-deoxy-D-arabino-heptulosonate 7-phosphate (DAHP) to dehydroquinate (DHQ). This is 3-dehydroquinate synthase from Rhizobium johnstonii (strain DSM 114642 / LMG 32736 / 3841) (Rhizobium leguminosarum bv. viciae).